The following is a 100-amino-acid chain: Large ribosomal subunit protein bL21 (100 aa).

The protein belongs to the bacterial ribosomal protein bL21 family. As to quaternary structure, part of the 50S ribosomal subunit. Contacts protein L20.

Functionally, this protein binds to 23S rRNA in the presence of protein L20. This is Large ribosomal subunit protein bL21 from Deinococcus deserti (strain DSM 17065 / CIP 109153 / LMG 22923 / VCD115).